Reading from the N-terminus, the 555-residue chain is MARVEL domain-containing protein 2 (555 aa).

Residues 1-20 are compositionally biased toward basic and acidic residues; the sequence is MSSSDARSRIRDRGYSEVPR. Positions 1-71 are disordered; sequence MSSSDARSRI…FYSSDTEEPA (71 aa). Topologically, residues 1–191 are cytoplasmic; the sequence is MSSSDARSRI…YMKSWAGLLR (191 aa). Positions 46 to 59 are enriched in pro residues; it reads PLPPPPLPLQPPFG. Phosphoserine occurs at positions 117, 121, and 158. Residues 118 to 142 form a disordered region; it reads PPASPARANHHPYKDPSRGSQGTFN. The residue at position 163 (T163) is a Phosphothreonine. Positions 185–364 constitute an MARVEL domain; the sequence is SWAGLLRILG…SALVCLKLWR (180 aa). The helical transmembrane segment at 192–212 threads the bilayer; it reads ILGVVELLLGAGVFACVTAYI. Residues 213 to 251 are Extracellular-facing; the sequence is HKDNEWYNLFGYTQPYGMGGLGSLGNTYGGYYYSGPKTP. Residues 252–272 form a helical membrane-spanning segment; that stretch reads FVLVVAGLAWITTIIILVLGM. Over 273 to 288 the chain is Cytoplasmic; that stretch reads SMYYRTILLDSNWWPL. A helical membrane pass occupies residues 289-309; the sequence is TEFGVNVALFILYMAAAIVYV. The Extracellular segment spans residues 310–338; sequence NDTNRGGLCYYPLFNTPMNAMFCRVEGGQ. The chain crosses the membrane as a helical span at residues 339–359; it reads IAAMIFLFVTMIVYLVSALVC. At 360–555 the chain is on the cytoplasmic side; sequence LKLWRHEAAR…VMNWDTQGYP (196 aa). Residue S384 is modified to Phosphoserine. K408 participates in a covalent cross-link: Glycyl lysine isopeptide (Lys-Gly) (interchain with G-Cter in ubiquitin). Positions 437–548 constitute an OCEL domain; sequence PDYVAKYPVI…RIQEYDKVMN (112 aa). Residues 521-545 are a coiled coil; the sequence is EKKERCDYLKNKLSHIKQRIQEYDK.

The protein belongs to the ELL/occludin family. As to quaternary structure, interacts with TJP1. Interacts with the ubiquitin ligase ITCH. Interacts (via C-terminal cytoplasmic domain) with LSR (via the cytoplasmic domain), ILDR1 and ILDR2; the interaction is required to recruit MARVELD2 to tricellular contacts. In terms of processing, ubiquitinated by ITCH; but this ubiquitination does not lead to proteasomal degradation. Polyubiquitinated at Lys-408 via 'Lys-63'-linked ubiquitin chains; deubiquitinated by USP53. Post-translationally, phosphorylated. As to expression, detected in small intestine, stomach and kidney, in epithelial cells. Detected in pancreas, retina and lung, and in stria vascularis, utricle and the organ of Conti in the inner ear (at protein level). Predominantly detected in small intestine, lung and kidney, with lower levels in liver, testis and brain. In colon, expressed in the entire crypts.

Its subcellular location is the cell membrane. The protein resides in the cell junction. It localises to the tight junction. Functionally, plays a role in the formation of tricellular tight junctions and of epithelial barriers. Required for normal hearing via its role in the separation of the endolymphatic and perilymphatic spaces of the organ of Corti in the inner ear, and for normal survival of hair cells in the organ of Corti. In Mus musculus (Mouse), this protein is MARVEL domain-containing protein 2.